The primary structure comprises 471 residues: Ammonium transporter Rh type B (471 aa).

Topologically, residues 1–13 are cytoplasmic; sequence MAGSPSRAAGRRL. The chain crosses the membrane as a helical span at residues 14–33; the sequence is QLPLLSFLQGATAVLFAVFV. The Extracellular segment spans residues 34–60; that stretch reads RYNHKTDAALWHRGNHSNADNEFYFRY. N-linked (GlcNAc...) asparagine glycosylation is present at Asn48. Residues 61 to 81 traverse the membrane as a helical segment; it reads PSFQDVHAMVFVGFGFLMVFL. Topologically, residues 82–85 are cytoplasmic; the sequence is QRYG. Residues 86-106 form a helical membrane-spanning segment; that stretch reads FSSVGFTFLLAAFALQWSTLV. Over 107-123 the chain is Extracellular; sequence QGFLHSFHGGHIHVGVE. A helical membrane pass occupies residues 124–144; that stretch reads SMINADFCAGAVLISFGAVLG. The Cytoplasmic segment spans residues 145-148; the sequence is KTGP. Residues 149-169 traverse the membrane as a helical segment; the sequence is AQLLLMALLEVVLFGINEFVL. Residues 170 to 177 lie on the Extracellular side of the membrane; the sequence is LHLLGVRD. The helical transmembrane segment at 178–200 threads the bilayer; it reads AGGSMTIHTFGAYFGLVLSQVLY. The Cytoplasmic segment spans residues 201 to 217; the sequence is RPQLEKSKHRQGLYHSD. A helical transmembrane segment spans residues 218-238; it reads LFAMIGTIFLWIFWPSFNAAL. Residues 239-249 are Extracellular-facing; it reads TSLGAGQHRTA. A helical membrane pass occupies residues 250 to 270; the sequence is LNTYYSLAASTLGTFALSALV. Residues 271 to 280 are Cytoplasmic-facing; the sequence is GEDGRLDMVH. The chain crosses the membrane as a helical span at residues 281–301; that stretch reads IQNAALAGRVVVGTSSEMMLT. Residue Pro302 is a topological domain, extracellular. A helical membrane pass occupies residues 303-323; it reads FGALAAGFLAGTVSTLGYKFF. Over 324 to 344 the chain is Cytoplasmic; that stretch reads TPILESKFKVQDTCGVHNLHG. A helical membrane pass occupies residues 345 to 365; it reads MPGVLGVLLGVLVAGLATHEA. At 366–391 the chain is on the extracellular side; that stretch reads YGDGLESVFPLIAEGQRSATSQAMYQ. A helical transmembrane segment spans residues 392–412; it reads LFGLFVTLMFASVGGGLGGLL. Topologically, residues 413–471 are cytoplasmic; it reads LKLPFLDSPPDSQCYEDQVHWQAPGATLSPLPTPAFQVPGEHEDKAQRPLRVEEADTQA. Residues 414-422 are interaction with ANK3; sequence KLPFLDSPP. The short motif at 427 to 430 is the Basolateral sorting signal element; it reads YEDQ. Residues 437–471 form a disordered region; it reads GATLSPLPTPAFQVPGEHEDKAQRPLRVEEADTQA. Positions 452–471 are enriched in basic and acidic residues; it reads GEHEDKAQRPLRVEEADTQA.

Belongs to the ammonium transporter (TC 2.A.49) family. Rh subfamily. As to quaternary structure, interacts (via C-terminus) with ANK2 and ANK3; required for targeting to the basolateral membrane. N-glycosylated.

The protein localises to the cell membrane. The protein resides in the basolateral cell membrane. The enzyme catalyses NH4(+)(in) = NH4(+)(out). It carries out the reaction methylamine(out) = methylamine(in). It catalyses the reaction CO2(out) = CO2(in). Its function is as follows. Ammonium transporter involved in the maintenance of acid-base homeostasis. Transports ammonium and its related derivative methylammonium across the basolateral plasma membrane of epithelial cells likely contributing to renal transepithelial ammonia transport and ammonia metabolism. May transport either NH4(+) or NH3 ammonia species predominantly mediating an electrogenic NH4(+) transport. May act as a CO2 channel providing for renal acid secretion. In Pongo pygmaeus (Bornean orangutan), this protein is Ammonium transporter Rh type B (RHBG).